The following is a 215-amino-acid chain: Cytochrome b6 (215 aa).

Residues 32–52 (IFYCLGGITFTCFIIQVATGF) form a helical membrane-spanning segment. Cys-35 is a heme c binding site. The heme b site is built by His-86 and His-100. Transmembrane regions (helical) follow at residues 90 to 110 (ASMM…TGGF), 116 to 136 (LTWV…VTGY), and 186 to 206 (LHTF…FLMI). Heme b-binding residues include His-187 and His-202.

The protein belongs to the cytochrome b family. PetB subfamily. The 4 large subunits of the cytochrome b6-f complex are cytochrome b6, subunit IV (17 kDa polypeptide, PetD), cytochrome f and the Rieske protein, while the 4 small subunits are PetG, PetL, PetM and PetN. The complex functions as a dimer. Heme b is required as a cofactor. Heme c serves as cofactor.

Its subcellular location is the plastid. The protein resides in the chloroplast thylakoid membrane. In terms of biological role, component of the cytochrome b6-f complex, which mediates electron transfer between photosystem II (PSII) and photosystem I (PSI), cyclic electron flow around PSI, and state transitions. This chain is Cytochrome b6, found in Euglena gracilis.